The primary structure comprises 313 residues: ADP-L-glycero-D-manno-heptose-6-epimerase (313 aa).

NADP(+) contacts are provided by residues 10–11 (MI), 31–32 (DN), Lys-38, Arg-53, 75–79 (EGACS), and Asn-92. Residue Tyr-139 is the Proton acceptor of the active site. Lys-143 contacts NADP(+). Substrate is bound at residue Asn-174. Residues Val-175 and Lys-183 each contribute to the NADP(+) site. Lys-183 functions as the Proton acceptor in the catalytic mechanism. Residues Ser-185, His-192, 206–209 (FAGS), Arg-214, and Tyr-277 each bind substrate.

It belongs to the NAD(P)-dependent epimerase/dehydratase family. HldD subfamily. Homopentamer. Requires NADP(+) as cofactor.

The enzyme catalyses ADP-D-glycero-beta-D-manno-heptose = ADP-L-glycero-beta-D-manno-heptose. It functions in the pathway nucleotide-sugar biosynthesis; ADP-L-glycero-beta-D-manno-heptose biosynthesis; ADP-L-glycero-beta-D-manno-heptose from D-glycero-beta-D-manno-heptose 7-phosphate: step 4/4. Its pathway is bacterial outer membrane biogenesis; LPS core biosynthesis. Functionally, catalyzes the interconversion between ADP-D-glycero-beta-D-manno-heptose and ADP-L-glycero-beta-D-manno-heptose via an epimerization at carbon 6 of the heptose. The sequence is that of ADP-L-glycero-D-manno-heptose-6-epimerase from Vibrio vulnificus (strain YJ016).